The following is a 369-amino-acid chain: Beta-1,4-galactosyltransferase 2 (369 aa).

At 1–15 (MSRLLGGTLERVCKA) the chain is on the cytoplasmic side. A helical; Signal-anchor for type II membrane protein transmembrane segment spans residues 16–36 (VLLLCLLHFLVAVILYFDVYA). The Lumenal segment spans residues 37-369 (QHLAFFSRFS…GQPMSWLTQG (333 aa)). Residues 58-73 (ASSSTNCSRPNATAAS) show a composition bias toward polar residues. A disordered region spans residues 58–90 (ASSSTNCSRPNATAASSGLPEVPSARPGPTAPV). Asn63 and Asn68 each carry an N-linked (GlcNAc...) asparagine glycan. Residues Cys94 and Cys136 are joined by a disulfide bond. Residues 147–151 (PFRHR), 186–188 (FNR), 214–215 (VD), and Trp275 contribute to the UDP-alpha-D-galactose site. Residues Cys208 and Cys227 are joined by a disulfide bond. Asp215 provides a ligand contact to Mn(2+). 277–280 (GEDD) serves as a coordination point for N-acetyl-D-glucosamine. Residue His308 coordinates Mn(2+). A UDP-alpha-D-galactose-binding site is contributed by 308-310 (HDR). Arg320 provides a ligand contact to N-acetyl-D-glucosamine. Asn354 carries N-linked (GlcNAc...) asparagine glycosylation.

It belongs to the glycosyltransferase 7 family. The cofactor is Mn(2+).

It localises to the golgi apparatus. The protein localises to the golgi stack membrane. It catalyses the reaction D-glucose + UDP-alpha-D-galactose = lactose + UDP + H(+). It carries out the reaction an N-acetyl-beta-D-glucosaminyl derivative + UDP-alpha-D-galactose = a beta-D-galactosyl-(1-&gt;4)-N-acetyl-beta-D-glucosaminyl derivative + UDP + H(+). The enzyme catalyses N-acetyl-D-glucosamine + UDP-alpha-D-galactose = beta-D-galactosyl-(1-&gt;4)-N-acetyl-D-glucosamine + UDP + H(+). Its pathway is protein modification; protein glycosylation. Its function is as follows. Responsible for the synthesis of complex-type N-linked oligosaccharides in many glycoproteins as well as the carbohydrate moieties of glycolipids. Can produce lactose. This Mus musculus (Mouse) protein is Beta-1,4-galactosyltransferase 2.